The primary structure comprises 4646 residues: Cytoplasmic dynein 1 heavy chain 1 (4646 aa).

Residue S2 is modified to N-acetylserine. The tract at residues 53 to 1867 is stem; sequence EAALEEKSAL…SIQMANAKFN (1815 aa). Phosphoserine is present on S70. Coiled coils occupy residues 181–202, 455–478, and 543–566; these read SVEKKIAELEMGLLHLQQNIEI, AHRKLQARLDQMRKFRRQHEQLRA, and TEAWEAAMKRYDERIDRVETRITA. The segment at 448 to 703 is interaction with DYNC1I2; that stretch reads MVWRINPAHR…NTQEIFDDWA (256 aa). The interval 651 to 802 is interaction with DYNC1LI2; it reads AKQIDRQLTA…EKVEERNTIS (152 aa). K1125 bears the N6-acetyllysine mark. 2 coiled-coil regions span residues 1171-1252 and 1357-1373; these read TYVQ…AVES and RKLRQNLDALLNQLKSF. Residue S1230 is modified to Phosphoserine. AAA stretches follow at residues 1868–2099, 2180–2452, 2556–2805, and 2899–3168; these read YGFE…VLVS, EELK…LTRL, EVET…WVRG, and VFYE…GGRT. ATP-binding positions include 1906–1913 and 2224–2231; these read GPAGTGKT and GPSGSGKS. Positions 2390-2411 are disordered; it reads GEDEAQRRRKGKEDEGEEAASP. ATP is bound by residues 2595 to 2602 and 2937 to 2944; these read GPPGSGKT and GVSGAGKT. 3 coiled-coil regions span residues 3189–3275, 3396–3500, and 3737–3800; these read EKRS…ADKQ, AIAQ…KNQM, and EFQL…VSQQ. A stalk region spans residues 3189–3500; it reads EKRSELEEQQ…KTSETFKNQM (312 aa). At K3480 the chain carries N6-acetyllysine. AAA regions lie at residues 3553–3782 and 4005–4221; these read LSNA…EVTR and AHMF…TVDT. S4162 is modified (phosphoserine). K4283 carries the post-translational modification N6-acetyllysine. T4366 is modified (phosphothreonine). The residue at position 4368 (S4368) is a Phosphoserine.

This sequence belongs to the dynein heavy chain family. Homodimer. The cytoplasmic dynein 1 complex consists of two catalytic heavy chains (HCs) and a number of non-catalytic subunits presented by intermediate chains (ICs), light intermediate chains (LICs) and light chains (LCs); the composition seems to vary in respect to the IC, LIC and LC composition. The heavy chain homodimer serves as a scaffold for the probable homodimeric assembly of the respective non-catalytic subunits. The ICs and LICs bind directly to the HC dimer and dynein LCs assemble on the IC dimer. Interacts with DYNC1LI1; DYNC1LI1 and DYNC1LI2 bind mutually exclusive to DYNC1H1. Interacts with DYNC1LI2; DYNC1LI1 and DYNC1LI2 bind mutually exclusive to DYNC1H1. Interacts with DYNC1I2. Interacts with BICD2. Interacts with isoform 2 of CRACR2A. Interacts with DNALI1.

The protein localises to the cytoplasm. It localises to the cytoskeleton. Its function is as follows. Cytoplasmic dynein 1 acts as a motor for the intracellular retrograde motility of vesicles and organelles along microtubules. Dynein has ATPase activity; the force-producing power stroke is thought to occur on release of ADP. Plays a role in mitotic spindle assembly and metaphase plate congression. This chain is Cytoplasmic dynein 1 heavy chain 1, found in Homo sapiens (Human).